Reading from the N-terminus, the 396-residue chain is Tryptophan synthase beta chain (396 aa).

N6-(pyridoxal phosphate)lysine is present on Lys-86.

The protein belongs to the TrpB family. Tetramer of two alpha and two beta chains. The cofactor is pyridoxal 5'-phosphate.

The catalysed reaction is (1S,2R)-1-C-(indol-3-yl)glycerol 3-phosphate + L-serine = D-glyceraldehyde 3-phosphate + L-tryptophan + H2O. It functions in the pathway amino-acid biosynthesis; L-tryptophan biosynthesis; L-tryptophan from chorismate: step 5/5. The beta subunit is responsible for the synthesis of L-tryptophan from indole and L-serine. This Francisella tularensis subsp. tularensis (strain FSC 198) protein is Tryptophan synthase beta chain.